The primary structure comprises 403 residues: L-alanine/L-glutamate racemase (403 aa).

Residues 62–64 (YSN), 92–93 (GL), and 209–211 (AVT) contribute to the pyridoxal 5'-phosphate site. Lys212 carries the N6-(pyridoxal phosphate)lysine modification.

The protein belongs to the trans-sulfuration enzymes family. Homotetramer; dimer of active dimers. The cofactor is pyridoxal 5'-phosphate.

The catalysed reaction is L-alanine = D-alanine. It catalyses the reaction L-glutamate = D-glutamate. The enzyme catalyses L,L-cystathionine + H2O = L-homocysteine + pyruvate + NH4(+). Its pathway is cell wall biogenesis; peptidoglycan biosynthesis. Catalyzes the racemization of L-alanine to D-alanine, and of L-glutamate to D-glutamate. The activity is low, but likely physiological since W.pipientis wMel lacks canonical alr and murI genes, while D-alanine and D-glutamate are essential components of peptidoglycan. Also displays a vestigial cystathionine beta-lyase (CBL) activity, cleaving cystathionine to homocysteine and pyruvate; however, this reaction seems not to be physiologically relevant since the only met gene in the genome of this obligately intracellular parasitic bacterium is metC, demonstrating that it is a methionine auxotroph. This is L-alanine/L-glutamate racemase from Wolbachia pipientis wMel.